The following is a 122-amino-acid chain: Large ribosomal subunit protein bL20 (122 aa).

This sequence belongs to the bacterial ribosomal protein bL20 family.

Functionally, binds directly to 23S ribosomal RNA and is necessary for the in vitro assembly process of the 50S ribosomal subunit. It is not involved in the protein synthesizing functions of that subunit. This Treponema pallidum (strain Nichols) protein is Large ribosomal subunit protein bL20 (rplT).